A 345-amino-acid chain; its full sequence is Anthranilate phosphoribosyltransferase (345 aa).

Residues G87, 90–91, T95, 97–100, 115–123, and S127 contribute to the 5-phospho-alpha-D-ribose 1-diphosphate site; these read GD, NAST, and KHGNRSFSS. G87 is an anthranilate binding site. A Mg(2+)-binding site is contributed by S99. An anthranilate-binding site is contributed by N118. R173 is an anthranilate binding site. 2 residues coordinate Mg(2+): D232 and E233.

It belongs to the anthranilate phosphoribosyltransferase family. Homodimer. Requires Mg(2+) as cofactor.

It catalyses the reaction N-(5-phospho-beta-D-ribosyl)anthranilate + diphosphate = 5-phospho-alpha-D-ribose 1-diphosphate + anthranilate. Its pathway is amino-acid biosynthesis; L-tryptophan biosynthesis; L-tryptophan from chorismate: step 2/5. Its function is as follows. Catalyzes the transfer of the phosphoribosyl group of 5-phosphorylribose-1-pyrophosphate (PRPP) to anthranilate to yield N-(5'-phosphoribosyl)-anthranilate (PRA). This chain is Anthranilate phosphoribosyltransferase, found in Aeropyrum pernix (strain ATCC 700893 / DSM 11879 / JCM 9820 / NBRC 100138 / K1).